Here is a 479-residue protein sequence, read N- to C-terminus: uncharacterized protein (479 aa).

Transmembrane regions (helical) follow at residues 11 to 31 (ILMA…LSLI), 43 to 63 (IVGL…AIAV), 90 to 110 (GTTW…ITGL), 151 to 171 (SGGI…SDPE), 195 to 215 (IFLT…PILG), 223 to 243 (WFLA…LICY), 274 to 294 (KALS…NSLH), 295 to 315 (INAT…SIVT), 328 to 348 (TLVW…SGFF), and 447 to 467 (WWIT…TIGM).

Belongs to the SLC13A/DASS transporter (TC 2.A.47) family. DIT1 subfamily.

The protein resides in the cell inner membrane. This is an uncharacterized protein from Haemophilus influenzae (strain ATCC 51907 / DSM 11121 / KW20 / Rd).